The primary structure comprises 360 residues: Phosphoserine aminotransferase (360 aa).

L-glutamate is bound at residue Arg41. Residues Trp101, Thr152, Asp172, and Gln195 each coordinate pyridoxal 5'-phosphate. Position 196 is an N6-(pyridoxal phosphate)lysine (Lys196). Residue 237 to 238 (NT) participates in pyridoxal 5'-phosphate binding.

It belongs to the class-V pyridoxal-phosphate-dependent aminotransferase family. SerC subfamily. In terms of assembly, homodimer. Pyridoxal 5'-phosphate serves as cofactor.

Its subcellular location is the cytoplasm. The catalysed reaction is O-phospho-L-serine + 2-oxoglutarate = 3-phosphooxypyruvate + L-glutamate. The enzyme catalyses 4-(phosphooxy)-L-threonine + 2-oxoglutarate = (R)-3-hydroxy-2-oxo-4-phosphooxybutanoate + L-glutamate. It participates in amino-acid biosynthesis; L-serine biosynthesis; L-serine from 3-phospho-D-glycerate: step 2/3. The protein operates within cofactor biosynthesis; pyridoxine 5'-phosphate biosynthesis; pyridoxine 5'-phosphate from D-erythrose 4-phosphate: step 3/5. Functionally, catalyzes the reversible conversion of 3-phosphohydroxypyruvate to phosphoserine and of 3-hydroxy-2-oxo-4-phosphonooxybutanoate to phosphohydroxythreonine. This is Phosphoserine aminotransferase from Burkholderia multivorans (strain ATCC 17616 / 249).